The primary structure comprises 488 residues: MAGALCVTLLLLLSTNTVSGRKTWRRRGQQIVPSGRERSEGGDESFPLDFTAVEGNMDNFMAQIKSLAQSLYPCSAQRLDDEMKLHILHNKSVTCNDGSSAGYYLKESKGSRRWLVFLEGGWYCISHENCDLRYDTMRRLMSSKAWPPAKTASGILSTQPEENPHWWNANMVFIPYCSSDVWSGASPKTEKSGYAFMGSLIIQEVVKELLGKGLDAAKVLLLAGSSAGGTGVLLNVDLVADLLEELGYPGIQVRGLSDSGWFLDNKQYRRTDCTDIITCAPTEAIQRGIRYWSSMVPERCKQQFKEGEEWNCFFGYKIYPTLRSPVFVVQWLFDEAQLTVDNVHLSGQPVQESQWLYIQNLGRELRNTLKDVGASFAPACLAHEVITRSHWTEIQVRGTSLPRALHCWDRRLQETNKNSKVPLKGCPFHLMDSCPWPQCNPTCPSIRDHFTGQEMSVVQFLMHLGFDVQKMASQQGMEPGKLLGVLSS.

An N-terminal signal peptide occupies residues 1 to 20; that stretch reads MAGALCVTLLLLLSTNTVSG. An N-linked (GlcNAc...) asparagine glycan is attached at Asn90. Residues Ser226, Asp334, and His383 each act as charge relay system in the active site.

It belongs to the pectinacetylesterase family. Notum subfamily. In terms of tissue distribution, expressed in the egg and through cleavage to gastrulation stages. Enriched in the animal (prospective ectoderm) and dorsal regions in early gastrula. Shows a dynamic expression during embryogenesis, in particular during neural induction and antero-posterior (AP) patterning.

The protein resides in the secreted. The enzyme catalyses [Wnt protein]-O-(9Z)-hexadecenoyl-L-serine + H2O = [Wnt protein]-L-serine + (9Z)-hexadecenoate + H(+). In terms of biological role, carboxylesterase that acts as a key negative regulator of the Wnt signaling pathway by specifically mediating depalmitoleoylation of WNT proteins. Serine palmitoleoylation of WNT proteins is required for efficient binding to frizzled receptors. Functions in the prospective ectoderm and is required for neural induction. The sequence is that of Palmitoleoyl-protein carboxylesterase notum1 from Xenopus laevis (African clawed frog).